The following is a 339-amino-acid chain: O-methyltransferase 7 (339 aa).

Residues Gly-186, Asp-209, Ser-232, Phe-233, and Lys-246 each contribute to the S-adenosyl-L-methionine site. His-250 serves as the catalytic Proton acceptor.

It belongs to the class I-like SAM-binding methyltransferase superfamily. Cation-independent O-methyltransferase family. COMT subfamily.

The enzyme catalyses (3,5-dichloro-2,4,6-trihydroxyphenyl)hexan-1-one + S-adenosyl-L-methionine = 1-(3,5-dichloro-2,6-dihydroxy-4-methoxyphenyl)hexan-1-one + S-adenosyl-L-homocysteine + H(+). This is O-methyltransferase 7 (omt7) from Dictyostelium discoideum (Social amoeba).